The primary structure comprises 489 residues: GTPase Der (489 aa).

2 consecutive EngA-type G domains span residues 3 to 166 (PVIA…PKDE) and 195 to 368 (IKIA…KSAV). Residues 9–16 (GRPNVGKS), 56–60 (DTGGI), 118–121 (NKID), 201–208 (GRPNVGKS), 248–252 (DTAGV), and 313–316 (NKWD) contribute to the GTP site. Positions 369–453 (TRWPTSRLTQ…PIRIEFKGGE (85 aa)) constitute a KH-like domain. The segment at 451–489 (GGENPYEGNKNTLTDRQVNKKRRMMSHHKKADKKRRDKR) is disordered. The span at 469–489 (NKKRRMMSHHKKADKKRRDKR) shows a compositional bias: basic residues.

The protein belongs to the TRAFAC class TrmE-Era-EngA-EngB-Septin-like GTPase superfamily. EngA (Der) GTPase family. Associates with the 50S ribosomal subunit.

GTPase that plays an essential role in the late steps of ribosome biogenesis. The polypeptide is GTPase Der (Pseudomonas syringae pv. tomato (strain ATCC BAA-871 / DC3000)).